Reading from the N-terminus, the 477-residue chain is Cysteine--tRNA ligase (477 aa).

Cys-29 contributes to the Zn(2+) binding site. Residues 31–41 (PTVQASPHIGH) carry the 'HIGH' region motif. Residues Cys-219, His-244, and Glu-248 each coordinate Zn(2+). Residues 275-279 (KMSKS) carry the 'KMSKS' region motif. ATP is bound at residue Lys-278.

It belongs to the class-I aminoacyl-tRNA synthetase family. As to quaternary structure, monomer. Requires Zn(2+) as cofactor.

The protein localises to the cytoplasm. The catalysed reaction is tRNA(Cys) + L-cysteine + ATP = L-cysteinyl-tRNA(Cys) + AMP + diphosphate. This is Cysteine--tRNA ligase from Leifsonia xyli subsp. xyli (strain CTCB07).